The sequence spans 76 residues: Rhesus theta defensin-1/3 subunit A (76 aa).

Positions 1–22 are cleaved as a signal peptide; sequence MRTFALLTAMLLLVALHAQAEA. Positions 23–64 are excised as a propeptide; that stretch reads RQARADEAAAQQQPGTDDQGMAHSFTWPENAALPLSESAKGL. The interval 25-45 is disordered; sequence ARADEAAAQQQPGTDDQGMAH. Arginine 65 is covalently cross-linked (Cyclopeptide (Arg-Cys) (interchain with C-73 in subunit A); in form RTD-3). A Cyclopeptide (Arg-Cys) (interchain with C-73 in subunit B); in form RTD-1 cross-link involves residue arginine 65. Cysteine 68 and cysteine 73 form a disulfide bridge. A Cyclopeptide (Cys-Arg) (interchain with R-65 in subunit A); in form RTD-3 cross-link involves residue cysteine 73. Cysteine 73 participates in a covalent cross-link: Cyclopeptide (Cys-Arg) (interchain with R-65 in subunit B); in form RTD-1. Residues 74–76 constitute a propeptide that is removed on maturation; that stretch reads RLL.

It belongs to the alpha-defensin family. Theta subfamily. As to quaternary structure, RTD-1 is a cyclic heterodimer composed of subunits A and B; disulfide-linked. RTD-3 is a cyclic homodimer composed of two subunits A; disulfide-linked. Forms a cyclic peptide with subunit A (RTD-3) or with subunit B (RTD-1). An additional intersubunit disulfide bond is formed. As to expression, RTD-1 is expressed in bone marrow. Detected in promyelocytes, myelocytes and mature neutrophils and monocytes.

In terms of biological role, RTD-1 and RTD-3 have similar antimicrobial activities against the Gram-positive bacteria S.aureus 502A and L.monocytogenes, the Gram-negative bacteria S.typhimurium and E.coli ML35, and the fungi C.albicans 16820 and C.neoformans 271A. This Macaca mulatta (Rhesus macaque) protein is Rhesus theta defensin-1/3 subunit A (RTD1A).